The following is a 105-amino-acid chain: Small ribosomal subunit protein uS10c (105 aa).

Belongs to the universal ribosomal protein uS10 family. Part of the 30S ribosomal subunit.

It localises to the plastid. The protein resides in the chloroplast. Functionally, involved in the binding of tRNA to the ribosomes. The protein is Small ribosomal subunit protein uS10c of Porphyra purpurea (Red seaweed).